Consider the following 77-residue polypeptide: MEKLTILLLVAAVLMSTQALPQGGGENRLKENIKFLLKRKTAADRGMWGDCDDWLAACTTPSQCCTEVCDGFCRLWE.

The first 19 residues, 1–19 (MEKLTILLLVAAVLMSTQA), serve as a signal peptide directing secretion. A propeptide spanning residues 20 to 45 (LPQGGGENRLKENIKFLLKRKTAADR) is cleaved from the precursor. Disulfide bonds link Cys-51–Cys-65, Cys-58–Cys-69, and Cys-64–Cys-73.

The protein belongs to the conotoxin O2 superfamily. Expressed by the venom duct.

The protein localises to the secreted. In Conus pennaceus (Feathered cone), this protein is Conotoxin PnMEKL-04.